The chain runs to 324 residues: Disintegrin-like/cysteine-rich protein MPIII-3 (324 aa).

Positions 1–20 (MIQVLLVIICLAVFPYQVSS) are cleaved as a signal peptide. Residues 21-173 (IILESGNINN…DEDPKKCEFR (153 aa)) constitute a propeptide, or 174 (in a minor form). One can recognise a Disintegrin; truncated domain in the interval 168-207 (KKCEFRRAGTECRPARSECDVAEYCTGQSAECPTDVFHSN). The interval 179-192 (CRPARSECDVAEYC) is inhibits platelet aggregation. 9 disulfide bridges follow: Cys-179-Cys-199, Cys-186-Cys-218, Cys-192-Cys-199, Cys-211-Cys-223, Cys-230-Cys-280, Cys-245-Cys-287, Cys-258-Cys-268, Cys-275-Cys-312, and Cys-306-Cys-317. The short motif at 185 to 187 (ECD) is the D/ECD-tripeptide element. Positions 187 and 190 each coordinate Ca(2+). 2 residues coordinate Ca(2+): Asp-202 and Val-203. The N-linked (GlcNAc...) asparagine glycan is linked to Asn-237.

The protein belongs to the venom metalloproteinase (M12B) family. P-III subfamily. P-IIIe sub-subfamily. As to quaternary structure, monomer. Is able to form a homodimer. In terms of processing, N-glycosylated. Exists in at least six differently N-glycosylated forms. The glycans likely have a stabilizing purpose. Post-translationally, cys-199 forms a disulfide bond with Cys-192 in 90% and with Cys-179 in 10% of the protein molecules; alternative disulfide bonds may have a major effect on the conformation of the protein. Expressed by the venom gland (at protein level). Expressed by the venom gland.

The protein resides in the secreted. Activity may be regulated by the intramolecular thiol-disulfide exchange or disulfide bond switching. Abolishes platelet aggregation induced by collagen, ADP (IC(50)=292 nM) and arachidonic-acid. The inhibition of collagen-induced platelet aggregation may be due to its ability to bind collagen and block the binding site on collagen for platelets and/or to its ability to bind to the platelet alpha-2/beta-1 collagen receptor (ITGA2/ITGB1) to block its interaction with collagen and hence prevent platelet stimulation. The inhibition of ADP- or arachidonic-acid-induced platelet aggregation may be due to it acting as an antagonist of the ADP receptors or thromboxane-prostanoid receptors of the platelets, respectively. Does not interact with integrins alpha-IIb (ITGA2B) or beta-3 (ITGB3) nor platelet glycoproteins VI (GP6) or IX (GP9) in vitro, however, the detection is dependent on experimental conditions and may happen in vivo. Able to bind to platelet glycoprotein Ib alpha chain (GP1BA) receptor in vitro, although this interaction may have pathologically only limited effect in vivo as it is not able to abolish the von Willebrand factor (vWF)-dependent platelet agglutination induced by ristocetin. Does not affect blood coagulation. The polypeptide is Disintegrin-like/cysteine-rich protein MPIII-3 (Vipera ammodytes ammodytes (Western sand viper)).